We begin with the raw amino-acid sequence, 441 residues long: Signal recognition particle 54 kDa protein (441 aa).

GTP-binding positions include 104-111 (GLQGSGKT), 186-190 (DTAGR), and 244-247 (TKLD).

This sequence belongs to the GTP-binding SRP family. SRP54 subfamily. As to quaternary structure, part of the signal recognition particle protein translocation system, which is composed of SRP and FtsY. Archaeal SRP consists of a 7S RNA molecule of 300 nucleotides and two protein subunits: SRP54 and SRP19.

Its subcellular location is the cytoplasm. It carries out the reaction GTP + H2O = GDP + phosphate + H(+). Involved in targeting and insertion of nascent membrane proteins into the cytoplasmic membrane. Binds to the hydrophobic signal sequence of the ribosome-nascent chain (RNC) as it emerges from the ribosomes. The SRP-RNC complex is then targeted to the cytoplasmic membrane where it interacts with the SRP receptor FtsY. In Staphylothermus marinus (strain ATCC 43588 / DSM 3639 / JCM 9404 / F1), this protein is Signal recognition particle 54 kDa protein.